We begin with the raw amino-acid sequence, 686 residues long: Methionine--tRNA ligase (686 aa).

Residues 15 to 25 (PYANGPIHLGH) carry the 'HIGH' region motif. Residues cysteine 146, cysteine 149, cysteine 159, and cysteine 162 each contribute to the Zn(2+) site. The short motif at 332 to 336 (KMSKS) is the 'KMSKS' region element. Lysine 335 is a binding site for ATP. The tRNA-binding domain maps to 585 to 686 (TFAKTDLRVA…DGAKPGQRIM (102 aa)).

The protein belongs to the class-I aminoacyl-tRNA synthetase family. MetG type 1 subfamily. Homodimer. The cofactor is Zn(2+).

The protein resides in the cytoplasm. It carries out the reaction tRNA(Met) + L-methionine + ATP = L-methionyl-tRNA(Met) + AMP + diphosphate. Its function is as follows. Is required not only for elongation of protein synthesis but also for the initiation of all mRNA translation through initiator tRNA(fMet) aminoacylation. The protein is Methionine--tRNA ligase of Psychromonas ingrahamii (strain DSM 17664 / CCUG 51855 / 37).